The chain runs to 152 residues: 6,7-dimethyl-8-ribityllumazine synthase (152 aa).

5-amino-6-(D-ribitylamino)uracil is bound by residues F21, 55 to 57, and 79 to 81; these read AFE and CVI. Residue 84–85 coordinates (2S)-2-hydroxy-3-oxobutyl phosphate; the sequence is AT. H87 acts as the Proton donor in catalysis. F112 is a 5-amino-6-(D-ribitylamino)uracil binding site. R126 is a (2S)-2-hydroxy-3-oxobutyl phosphate binding site.

Belongs to the DMRL synthase family. Forms an icosahedral capsid composed of 60 subunits, arranged as a dodecamer of pentamers.

It catalyses the reaction (2S)-2-hydroxy-3-oxobutyl phosphate + 5-amino-6-(D-ribitylamino)uracil = 6,7-dimethyl-8-(1-D-ribityl)lumazine + phosphate + 2 H2O + H(+). It participates in cofactor biosynthesis; riboflavin biosynthesis; riboflavin from 2-hydroxy-3-oxobutyl phosphate and 5-amino-6-(D-ribitylamino)uracil: step 1/2. Catalyzes the formation of 6,7-dimethyl-8-ribityllumazine by condensation of 5-amino-6-(D-ribitylamino)uracil with 3,4-dihydroxy-2-butanone 4-phosphate. This is the penultimate step in the biosynthesis of riboflavin. The sequence is that of 6,7-dimethyl-8-ribityllumazine synthase from Staphylococcus haemolyticus (strain JCSC1435).